The following is a 459-amino-acid chain: Ribulose bisphosphate carboxylase large chain (459 aa).

A propeptide spanning residues 1-2 is cleaved from the precursor; the sequence is MS. N-acetylproline is present on Pro-3. Position 14 is an N6,N6,N6-trimethyllysine (Lys-14). Substrate-binding residues include Asn-123 and Thr-173. Residue Lys-175 is the Proton acceptor of the active site. Residue Lys-177 coordinates substrate. 3 residues coordinate Mg(2+): Lys-201, Asp-203, and Glu-204. An N6-carboxylysine modification is found at Lys-201. His-294 serves as the catalytic Proton acceptor. Residues Arg-295, His-327, and Ser-379 each contribute to the substrate site.

The protein belongs to the RuBisCO large chain family. Type I subfamily. In terms of assembly, heterohexadecamer of 8 large chains and 8 small chains; disulfide-linked. The disulfide link is formed within the large subunit homodimers. The cofactor is Mg(2+). In terms of processing, the disulfide bond which can form in the large chain dimeric partners within the hexadecamer appears to be associated with oxidative stress and protein turnover.

It localises to the plastid. The protein resides in the chloroplast. It catalyses the reaction 2 (2R)-3-phosphoglycerate + 2 H(+) = D-ribulose 1,5-bisphosphate + CO2 + H2O. The enzyme catalyses D-ribulose 1,5-bisphosphate + O2 = 2-phosphoglycolate + (2R)-3-phosphoglycerate + 2 H(+). RuBisCO catalyzes two reactions: the carboxylation of D-ribulose 1,5-bisphosphate, the primary event in carbon dioxide fixation, as well as the oxidative fragmentation of the pentose substrate in the photorespiration process. Both reactions occur simultaneously and in competition at the same active site. The chain is Ribulose bisphosphate carboxylase large chain from Streptopus lanceolatus (Rose twisted stalk).